Consider the following 320-residue polypeptide: Aminoacyl tRNA synthase complex-interacting multifunctional protein 2 (320 aa).

Ser-36 bears the Phosphoserine mark. Residues 82–162 (TPDADLDVTN…HTHSSVKNVP (81 aa)) form an interaction with PRKN region. Residues 162 to 225 (PENLVKCFGE…FLFSLFGQKH (64 aa)) form an interaction with TP53 region. The region spanning 220–317 (LFGQKHNAVT…NLAPFSTALQ (98 aa)) is the GST C-terminal domain.

As to quaternary structure, part of the multisynthetase complex (MSC), a multisubunit complex that groups tRNA ligases for Arg (RARS1), Asp (DARS1), Gln (QARS1), Ile (IARS1), Leu (LARS1), Lys (KARS1), Met (MARS1) the bifunctional ligase for Glu and Pro (EPRS1) and the auxiliary subunits AIMP1/p43, AIMP2/p38 and EEF1E1/p18. Interacts (via N-terminus) with KARS1. Interacts with EPRS1. Forms a linear complex that contains MARS1, EEF1E1, EPRS1 and AIMP2 that is at the core of the multisubunit complex. Binds FUBP1 (via C-terminus). Interacts in both its unphosphorylated and phosphorylated forms with p53/TP53 (via N-terminus) in the nucleus following UV irradiation. Interacts (via N-terminus) with PRKN/parkin (via first RING-type domain). Interacts with TARS3. Post-translationally, phosphorylated on serine residues in response to UV irradiation. Ubiquitinated by PRKN, leading to its degradation by the proteasome.

The protein localises to the cytoplasm. The protein resides in the cytosol. It localises to the nucleus. Required for assembly and stability of the aminoacyl-tRNA synthase complex. Mediates ubiquitination and degradation of FUBP1, a transcriptional activator of MYC, leading to MYC down-regulation which is required for aveolar type II cell differentiation. Blocks MDM2-mediated ubiquitination and degradation of p53/TP53. Functions as a proapoptotic factor. The polypeptide is Aminoacyl tRNA synthase complex-interacting multifunctional protein 2 (Aimp2) (Mus musculus (Mouse)).